We begin with the raw amino-acid sequence, 207 residues long: Large ribosomal subunit protein uL4 (207 aa).

The protein belongs to the universal ribosomal protein uL4 family. In terms of assembly, part of the 50S ribosomal subunit.

In terms of biological role, one of the primary rRNA binding proteins, this protein initially binds near the 5'-end of the 23S rRNA. It is important during the early stages of 50S assembly. It makes multiple contacts with different domains of the 23S rRNA in the assembled 50S subunit and ribosome. Functionally, forms part of the polypeptide exit tunnel. The polypeptide is Large ribosomal subunit protein uL4 (Geobacter metallireducens (strain ATCC 53774 / DSM 7210 / GS-15)).